Here is a 157-residue protein sequence, read N- to C-terminus: 6,7-dimethyl-8-ribityllumazine synthase (157 aa).

5-amino-6-(D-ribitylamino)uracil contacts are provided by residues F26, 60-62 (ALE), and 86-88 (AVI). Position 91–92 (91–92 (ET)) interacts with (2S)-2-hydroxy-3-oxobutyl phosphate. The Proton donor role is filled by H94. Position 119 (N119) interacts with 5-amino-6-(D-ribitylamino)uracil. Position 133 (R133) interacts with (2S)-2-hydroxy-3-oxobutyl phosphate.

The protein belongs to the DMRL synthase family.

The enzyme catalyses (2S)-2-hydroxy-3-oxobutyl phosphate + 5-amino-6-(D-ribitylamino)uracil = 6,7-dimethyl-8-(1-D-ribityl)lumazine + phosphate + 2 H2O + H(+). Its pathway is cofactor biosynthesis; riboflavin biosynthesis; riboflavin from 2-hydroxy-3-oxobutyl phosphate and 5-amino-6-(D-ribitylamino)uracil: step 1/2. Functionally, catalyzes the formation of 6,7-dimethyl-8-ribityllumazine by condensation of 5-amino-6-(D-ribitylamino)uracil with 3,4-dihydroxy-2-butanone 4-phosphate. This is the penultimate step in the biosynthesis of riboflavin. This chain is 6,7-dimethyl-8-ribityllumazine synthase, found in Laribacter hongkongensis (strain HLHK9).